We begin with the raw amino-acid sequence, 508 residues long: Maturase K (508 aa).

This sequence belongs to the intron maturase 2 family. MatK subfamily.

The protein resides in the plastid. It is found in the chloroplast. Its function is as follows. Usually encoded in the trnK tRNA gene intron. Probably assists in splicing its own and other chloroplast group II introns. This Gordonia lasianthus (Loblolly bay) protein is Maturase K.